We begin with the raw amino-acid sequence, 607 residues long: Branchpoint-bridging protein (607 aa).

Polar residues-rich tracts occupy residues 1-15 (MSWR…NNIP) and 35-45 (VTPSAPSSVTN). Disordered regions lie at residues 1 to 92 (MSWR…TENK) and 134 to 155 (VPAD…GRRV). A compositionally biased stretch (basic and acidic residues) spans 46–76 (GDRDRDRDGPVYSNDRDVKRGRSPERSEDGP). A KH domain is found at 201 to 281 (YVPVNDYPEI…EKVNKAKKLI (81 aa)). 2 CCHC-type zinc fingers span residues 319 to 336 (QACQ…DCPE) and 344 to 361 (IICR…DCPD). Disordered regions lie at residues 363 to 390 (QRGA…GGDA) and 407 to 607 (AAPA…PPGA). Gly residues predominate over residues 373–389 (PGAGRTAGRIGSSGGGD). The span at 472 to 500 (ARDRNERRHDDRDRGDSYYGGDRRHDDYG) shows a compositional bias: basic and acidic residues. Residues 521–533 (SAPAIPTAPAYPG) show a composition bias toward low complexity. The segment covering 534–545 (AYGGYPGYGAPP) has biased composition (gly residues). Composition is skewed to pro residues over residues 550–563 (APPP…PGAP) and 581–607 (APPP…PPGA).

It belongs to the BBP/SF1 family.

It localises to the nucleus. In terms of biological role, necessary for the splicing of pre-mRNA. Has a role in the recognition of the branch site (5'-UACUAAC-3'), the pyrimidine tract and the 3'-splice site at the 3'-end of introns. The chain is Branchpoint-bridging protein (bbp-1) from Neurospora crassa (strain ATCC 24698 / 74-OR23-1A / CBS 708.71 / DSM 1257 / FGSC 987).